A 144-amino-acid polypeptide reads, in one-letter code: Ribosome-binding factor A (144 aa).

Positions 121–144 (KAQTGVEEPLENTAEGEENPSGGE) are disordered. The segment covering 128-138 (EPLENTAEGEE) has biased composition (acidic residues).

This sequence belongs to the RbfA family. As to quaternary structure, monomer. Binds 30S ribosomal subunits, but not 50S ribosomal subunits or 70S ribosomes.

The protein localises to the cytoplasm. One of several proteins that assist in the late maturation steps of the functional core of the 30S ribosomal subunit. Associates with free 30S ribosomal subunits (but not with 30S subunits that are part of 70S ribosomes or polysomes). Required for efficient processing of 16S rRNA. May interact with the 5'-terminal helix region of 16S rRNA. In Synechococcus sp. (strain JA-2-3B'a(2-13)) (Cyanobacteria bacterium Yellowstone B-Prime), this protein is Ribosome-binding factor A.